Consider the following 127-residue polypeptide: Large ribosomal subunit protein bL17 (127 aa).

Belongs to the bacterial ribosomal protein bL17 family. Part of the 50S ribosomal subunit. Contacts protein L32.

This is Large ribosomal subunit protein bL17 from Pelobacter propionicus (strain DSM 2379 / NBRC 103807 / OttBd1).